A 368-amino-acid polypeptide reads, in one-letter code: MSETAKKVIVGMSGGVDSSVSAWLLQQQGYQVEGLFMKNWEEDDGEEYCTAAADLADAQAVCDKLGIELHTVNFAAEYWDNVFELFLAEYKAGRTPNPDILCNKEIKFKAFLEFAAEDLGADYIATGHYVRRADVDGKSRLLRGLDSNKDQSYFLYTLSHEQIAKSLFPVGELEKPQVRKIAEDLGLVTAKKKDSTGICFIGERKFREFLGRYLPAQPGKIITVDGDEIGEHQGLMYHTLGQRKGLGIGGTKEGTEEPWYVVDKDVENNILIVAQGHEHPRLMSIGLIAQQLHWVDREPFTGTMRCTVKTRYRQTDIPCTVKALDDDRIEVIFDEPVAAVTPGQSAVFYNGEVCLGGGIIEQRLPLPV.

ATP-binding positions include 11–18 (GMSGGVDS) and Met-37. The tract at residues 97–99 (NPD) is interaction with target base in tRNA. Cys-102 (nucleophile) is an active-site residue. Residues Cys-102 and Cys-199 are joined by a disulfide bond. Gly-127 contributes to the ATP binding site. An interaction with tRNA region spans residues 149-151 (KDQ). Cys-199 serves as the catalytic Cysteine persulfide intermediate. The segment at 311-312 (RY) is interaction with tRNA.

This sequence belongs to the MnmA/TRMU family. In terms of assembly, interacts with TusE.

Its subcellular location is the cytoplasm. It carries out the reaction S-sulfanyl-L-cysteinyl-[protein] + uridine(34) in tRNA + AH2 + ATP = 2-thiouridine(34) in tRNA + L-cysteinyl-[protein] + A + AMP + diphosphate + H(+). In terms of biological role, catalyzes the 2-thiolation of uridine at the wobble position (U34) of tRNA(Lys), tRNA(Glu) and tRNA(Gln), leading to the formation of s(2)U34, the first step of tRNA-mnm(5)s(2)U34 synthesis. Sulfur is provided by IscS, via a sulfur-relay system. Binds ATP and its substrate tRNAs. The protein is tRNA-specific 2-thiouridylase MnmA of Shigella dysenteriae serotype 1 (strain Sd197).